We begin with the raw amino-acid sequence, 286 residues long: Interferon-induced 35 kDa protein (286 aa).

Residues 5–26 are leucine-zipper; that stretch reads LDAALHALQEEQARLKMRLWDL. 2 consecutive NID domains span residues 81-170 and 183-266; these read ALIT…GDVD and FARD…GEVE.

This sequence belongs to the NMI family. In terms of assembly, homodimer. Also interacts with BATF. Interacts with TRIM21. Interacts with NMI; the interaction is direct and is facilitated by TRIM21. Post-translationally, phosphorylated. Dephosphorylation correlates with the formation of a complex with NMI. In terms of tissue distribution, expressed in a wide range of cell types, including fibroblasts, macrophages, and epithelial cells.

The protein resides in the cytoplasm. It localises to the nucleus. The protein localises to the secreted. Its function is as follows. Acts as a signaling pathway regulator involved in innate immune system response. In response to interferon IFN-alpha, associates in a complex with signaling pathway regulator NMI to regulate immune response; the complex formation prevents proteasome-mediated degradation of IFI35 and correlates with IFI35 dephosphorylation. In complex with NMI, inhibits virus-triggered type I interferon/IFN-beta production. In complex with NMI, negatively regulates nuclear factor NF-kappa-B signaling by inhibiting the nuclear translocation, activation and transcription of the NF-kappa-B subunit p65/RELA, resulting in the inhibition of endothelial cell proliferation, migration and re-endothelialization of injured arteries. Beside its role as an intracellular signaling pathway regulator, also functions extracellularly as damage-associated molecular patterns (DAMPs) to promote inflammation when actively released by macrophage to the extracellular space during cell injury and pathogen invasion. Macrophage-secreted IFI35 activates NF-kappa-B signaling in adjacent macrophages through Toll-like receptor 4/TLR4 activation, thereby inducing NF-kappa-B translocation from the cytoplasm into the nucleus which promotes the release of pro-inflammatory cytokines. This chain is Interferon-induced 35 kDa protein, found in Homo sapiens (Human).